The sequence spans 187 residues: HTH-type transcriptional regulator NfxB (187 aa).

Positions 26 to 45 form a DNA-binding region, H-T-H motif; sequence LKELAEAAGVSKATLHRFCG.

Its function is as follows. Confers resistance to guinolones. May negatively regulate the expression of genes that are associated with cell permeability to drugs. The polypeptide is HTH-type transcriptional regulator NfxB (nfxB) (Pseudomonas aeruginosa (strain ATCC 15692 / DSM 22644 / CIP 104116 / JCM 14847 / LMG 12228 / 1C / PRS 101 / PAO1)).